The chain runs to 333 residues: Glyceraldehyde-3-phosphate dehydrogenase (333 aa).

NAD(+)-binding positions include 11 to 12, D33, R78, and S120; that span reads RI. Residues 149-151, T180, 209-210, and R232 each bind D-glyceraldehyde 3-phosphate; these read SCT and TG. The Nucleophile role is filled by C150. C150 is modified (S-nitrosocysteine). N314 is an NAD(+) binding site.

Belongs to the glyceraldehyde-3-phosphate dehydrogenase family. In terms of assembly, homotetramer. Post-translationally, S-nitrosylation of Cys-150 leads to translocation to the nucleus.

Its subcellular location is the cytoplasm. It is found in the cytosol. The protein localises to the cytoskeleton. The protein resides in the nucleus. It carries out the reaction D-glyceraldehyde 3-phosphate + phosphate + NAD(+) = (2R)-3-phospho-glyceroyl phosphate + NADH + H(+). The catalysed reaction is S-nitroso-L-cysteinyl-[GAPDH] + L-cysteinyl-[protein] = L-cysteinyl-[GAPDH] + S-nitroso-L-cysteinyl-[protein]. It functions in the pathway carbohydrate degradation; glycolysis; pyruvate from D-glyceraldehyde 3-phosphate: step 1/5. Functionally, has both glyceraldehyde-3-phosphate dehydrogenase and nitrosylase activities, thereby playing a role in glycolysis and nuclear functions, respectively. Glyceraldehyde-3-phosphate dehydrogenase is a key enzyme in glycolysis that catalyzes the first step of the pathway by converting D-glyceraldehyde 3-phosphate (G3P) into 3-phospho-D-glyceroyl phosphate. Participates in nuclear events including transcription, RNA transport, DNA replication and apoptosis. Nuclear functions are probably due to the nitrosylase activity that mediates cysteine S-nitrosylation of nuclear target proteins such as SIRT1, HDAC2 and PRKDC. In Danio rerio (Zebrafish), this protein is Glyceraldehyde-3-phosphate dehydrogenase.